Reading from the N-terminus, the 596-residue chain is Aspartate--tRNA(Asp/Asn) ligase (596 aa).

Glu-173 is a binding site for L-aspartate. The segment at 197-200 (QLFK) is aspartate. Arg-219 is a binding site for L-aspartate. ATP-binding positions include 219-221 (RDE) and Gln-228. His-450 lines the L-aspartate pocket. Glu-485 contacts ATP. Arg-492 contacts L-aspartate. An ATP-binding site is contributed by 537-540 (GLDR).

Belongs to the class-II aminoacyl-tRNA synthetase family. Type 1 subfamily. In terms of assembly, homodimer.

The protein localises to the cytoplasm. It catalyses the reaction tRNA(Asx) + L-aspartate + ATP = L-aspartyl-tRNA(Asx) + AMP + diphosphate. In terms of biological role, aspartyl-tRNA synthetase with relaxed tRNA specificity since it is able to aspartylate not only its cognate tRNA(Asp) but also tRNA(Asn). Reaction proceeds in two steps: L-aspartate is first activated by ATP to form Asp-AMP and then transferred to the acceptor end of tRNA(Asp/Asn). The sequence is that of Aspartate--tRNA(Asp/Asn) ligase from Hydrogenovibrio crunogenus (strain DSM 25203 / XCL-2) (Thiomicrospira crunogena).